A 184-amino-acid polypeptide reads, in one-letter code: Transcription termination/antitermination protein NusG (184 aa).

The KOW domain maps to 133–163 (EGDQVRVVSGPFADFTGTVTEINPERGKVKV).

Belongs to the NusG family.

Participates in transcription elongation, termination and antitermination. The protein is Transcription termination/antitermination protein NusG of Thermus thermophilus (strain ATCC 27634 / DSM 579 / HB8).